A 369-amino-acid chain; its full sequence is Phenylalanine--tRNA ligase alpha subunit (369 aa).

E269 contributes to the Mg(2+) binding site.

The protein belongs to the class-II aminoacyl-tRNA synthetase family. Phe-tRNA synthetase alpha subunit type 1 subfamily. Tetramer of two alpha and two beta subunits. Mg(2+) serves as cofactor.

The protein resides in the cytoplasm. The catalysed reaction is tRNA(Phe) + L-phenylalanine + ATP = L-phenylalanyl-tRNA(Phe) + AMP + diphosphate + H(+). In Nitrobacter winogradskyi (strain ATCC 25391 / DSM 10237 / CIP 104748 / NCIMB 11846 / Nb-255), this protein is Phenylalanine--tRNA ligase alpha subunit.